The sequence spans 876 residues: Phosphoenolpyruvate carboxylase (876 aa).

Catalysis depends on residues histidine 138 and lysine 543.

The protein belongs to the PEPCase type 1 family. Requires Mg(2+) as cofactor.

It carries out the reaction oxaloacetate + phosphate = phosphoenolpyruvate + hydrogencarbonate. Functionally, forms oxaloacetate, a four-carbon dicarboxylic acid source for the tricarboxylic acid cycle. The polypeptide is Phosphoenolpyruvate carboxylase (Vibrio atlanticus (strain LGP32) (Vibrio splendidus (strain Mel32))).